Here is a 206-residue protein sequence, read N- to C-terminus: Adenine phosphoribosyltransferase (206 aa).

The protein belongs to the purine/pyrimidine phosphoribosyltransferase family. Homodimer.

The protein localises to the cytoplasm. The catalysed reaction is AMP + diphosphate = 5-phospho-alpha-D-ribose 1-diphosphate + adenine. The protein operates within purine metabolism; AMP biosynthesis via salvage pathway; AMP from adenine: step 1/1. Its function is as follows. Catalyzes a salvage reaction resulting in the formation of AMP, that is energically less costly than de novo synthesis. In Burkholderia mallei (strain NCTC 10229), this protein is Adenine phosphoribosyltransferase.